The sequence spans 578 residues: Zinc finger protein with KRAB and SCAN domains 8 (578 aa).

The interval 1-20 (MAEESRKPSAPSPPDQTPEE) is disordered. Serine 12 carries the post-translational modification Phosphoserine. Residue lysine 26 forms a Glycyl lysine isopeptide (Lys-Gly) (interchain with G-Cter in SUMO2) linkage. In terms of domain architecture, SCAN box spans 51-133 (RLRFRQLCYQ…TLLEDLERQI (83 aa)). The interval 158-205 (ASAPEPPNTQLQSEATQHKSPVPQESQERAMSTSQSPTRSQKGSSGDQ) is disordered. Positions 165 to 205 (NTQLQSEATQHKSPVPQESQERAMSTSQSPTRSQKGSSGDQ) are enriched in polar residues. Glycyl lysine isopeptide (Lys-Gly) (interchain with G-Cter in SUMO2) cross-links involve residues lysine 176 and lysine 199. At serine 201 the chain carries Phosphoserine. Residues 220-316 (EKIEDMAVSL…GRLERQRGNP (97 aa)) form the KRAB domain. Glycyl lysine isopeptide (Lys-Gly) (interchain with G-Cter in SUMO2) cross-links involve residues lysine 221, lysine 272, and lysine 288. 2 C2H2-type zinc fingers span residues 322 to 344 (HKCD…WRIH) and 350 to 372 (YQCN…QDIH). Glycyl lysine isopeptide (Lys-Gly) (interchain with G-Cter in SUMO2) cross-links involve residues lysine 374 and lysine 376. 7 consecutive C2H2-type zinc fingers follow at residues 378–400 (YHCK…QRIH), 406–428 (YQCN…QRIH), 434–456 (YECN…QRIH), 462–484 (YECD…QRSH), 490–512 (YKCN…QRIH), 518–540 (YKCK…LRIH), and 546–568 (YQCN…QRIH). Residues lysine 413 and lysine 441 each participate in a glycyl lysine isopeptide (Lys-Gly) (interchain with G-Cter in SUMO2) cross-link. Lysine 502 is covalently cross-linked (Glycyl lysine isopeptide (Lys-Gly) (interchain with G-Cter in SUMO2)). Lysine 572 is covalently cross-linked (Glycyl lysine isopeptide (Lys-Gly) (interchain with G-Cter in SUMO2)).

It belongs to the krueppel C2H2-type zinc-finger protein family.

Its subcellular location is the nucleus. Functionally, may be involved in transcriptional regulation. The chain is Zinc finger protein with KRAB and SCAN domains 8 (ZKSCAN8) from Pan troglodytes (Chimpanzee).